The sequence spans 1034 residues: MVKEGKAMEIKEAFDLSQKAHQNHAKLVSSLRAAYNKTEDKSIFLEEFIHFLKFPLIVYRREPAVERVMDFVAKFVTSFHNSGGENEEEADEENSPVNCLFNFLLQSHGASSMAVRFRVCQLINKLLVNLPENAQIDDDLFDKIHDAMLIRLKDRVPNVRIQAVLALARLQDPSDPDCPVSNAYVHLLENDSNPEVRRAVLTCIAPSAKSLPKIVGRTMDVKEPVRKLAYQVLSEKVHIRALTIAQRVKLLQQGLNDRSAAVKDVIQKKLIQAWLQYSEGDVLDLLHRLDVENSPEVSLSALNALFSVSPVGELVQNCKNLDERKLIPVETLTPENVLYWRALCEHLKSKGDEGEAALENILPEPAVYARYLSSYLQTLPVLSEDQRADMTKIEDLMTKEFIGQQLILTIGCLDTSEEGGRKRLLAVLQEILVMQNTPTSLISSLAELLLFVLKDDDKRIQTVAEIISELREPIVTVDNPKDAAQSRKLQLKLADVKVQLIEAKQALEDSLTNEDYSRASELKEKVKELESLKTQLIKEAEEPEMKEIRVEKNDPETLLKCLIMCNELLKHLSLSKGLGGTLNEICESLILPGITNVHPSVRNMAVLCIGCCALQNKDFARQHLPLLLQILQLDEVKVKNSALNAVFDMLLLFGMDILKSKPTNPDDSQCKAQENADEDISEQEKPGSVDENLTNEEVQEETATVNGILHLFSGFLDSEIAEIRTETAEGLVKLMFSGRLISAKLLSRLILLWYNPVTEEDTKLRHCLGVFFPIFAYSCRSNQECFAEAFLPTLQTLFNAPASSPLADVDVANVAELLVDLTRPSGLNPQNKQSQDYQAAMVHDGLAIKICNEILKDPTAPDVRIYAKALCSLELSRENSTDLLPLLDCAVEDVTDKVCERAIEKVRSQLRSGREEHRVSKETEPQVSKETEDRTNLQENEEGKQKDEANCDENTDTVKEKAARGKATKGRRKGPAAAATRRKASKAEEAEAEMERQEESQCVPVNTRPSRRAKTAALEKTKKNLSKLLNEEAN.

7 HEAT repeats span residues 95-132 (SPVNCLFNFLLQSHGASSMAVRFRVCQLINKLLVNLPE), 139-176 (DLFDKIHDAMLIRLKDRVPNVRIQAVLALARLQDPSDP), 178-213 (CPVSNAYVHLLENDSNPEVRRAVLTCIAPSAKSLPK), 242-279 (LTIAQRVKLLQQGLNDRSAAVKDVIQKKLIQAWLQYSE), 281-317 (DVLDLLHRLDVENSPEVSLSALNALFSVSPVGELVQN), 439-476 (TSLISSLAELLLFVLKDDDKRIQTVAEIISELREPIVT), and 618-655 (DFARQHLPLLLQILQLDEVKVKNSALNAVFDMLLLFGM). Over residues 663–672 (TNPDDSQCKA) the composition is skewed to polar residues. The interval 663–693 (TNPDDSQCKAQENADEDISEQEKPGSVDENL) is disordered. 3 HEAT repeats span residues 703 to 740 (ATVNGILHLFSGFLDSEIAEIRTETAEGLVKLMFSGRL), 785 to 823 (CFAEAFLPTLQTLFNAPASSPLADVDVANVAELLVDLTR), and 878 to 915 (ENSTDLLPLLDCAVEDVTDKVCERAIEKVRSQLRSGRE). Over residues 909-949 (QLRSGREEHRVSKETEPQVSKETEDRTNLQENEEGKQKDEA) the composition is skewed to basic and acidic residues. Positions 909-1034 (QLRSGREEHR…LSKLLNEEAN (126 aa)) are disordered. A compositionally biased stretch (basic residues) spans 964–984 (RGKATKGRRKGPAAAATRRKA). Over residues 985–999 (SKAEEAEAEMERQEE) the composition is skewed to basic and acidic residues.

This sequence belongs to the CND3 (condensin subunit 3) family. In terms of assembly, component of the condensin complex, which contains the XCAP-E/SMC2 and XCAP-C/SMC4 heterodimer, and three non SMC subunits that probably regulate the complex: XCAP-H/NCAPH, XCAP-D2/NCAPD2 and XCAP-G/NCAPG. In terms of processing, phosphorylated by cdk1. Its phosphorylation, as well as that of XCAP-D2 and XCAP-H subunits, activates the condensin complex and is required for chromosome condensation.

Its subcellular location is the nucleus. It is found in the cytoplasm. The protein resides in the chromosome. In terms of biological role, regulatory subunit of the condensin complex, a complex required for conversion of interphase chromatin into mitotic-like condense chromosomes. The condensin complex probably introduces positive supercoils into relaxed DNA in the presence of type I topoisomerases and converts nicked DNA into positive knotted forms in the presence of type II topoisomerase. This is Condensin complex subunit 3 (ncapg) from Xenopus laevis (African clawed frog).